We begin with the raw amino-acid sequence, 559 residues long: Poly(3-hydroxyalkanoate) polymerase 1 (559 aa).

Cys-296 is a catalytic residue.

The protein belongs to the PHA/PHB synthase family. Type II PhaC subfamily.

Its pathway is biopolymer metabolism; poly-(R)-3-hydroxybutanoate biosynthesis. Its function is as follows. Synthesizes poly(3-hydroxyalkanoates) (PHA), complements a mutant of P.putida that does not make PHA. The sequence is that of Poly(3-hydroxyalkanoate) polymerase 1 from Ectopseudomonas oleovorans (Pseudomonas oleovorans).